The primary structure comprises 1028 residues: Contactin-6 (1028 aa).

The N-terminal stretch at 1–19 (MRLLWKLVILLPLINSSAG) is a signal peptide. Ig-like C2-type domains follow at residues 26–117 (PIFT…AKLQ), 122–208 (EDFE…RSVQ), 227–308 (PKIE…RNLA), 318–402 (PEWE…AELR), 408–495 (PDFS…GSLI), and 499–587 (RTVI…ESLS). 6 disulfide bridges follow: Cys-50/Cys-100, Cys-144/Cys-196, Cys-249/Cys-297, Cys-339/Cys-386, Cys-431/Cys-479, and Cys-521/Cys-577. N-linked (GlcNAc...) asparagine glycans are attached at residues Asn-65 and Asn-193. N-linked (GlcNAc...) asparagine glycans are attached at residues Asn-368, Asn-377, and Asn-468. 4 consecutive Fibronectin type-III domains span residues 600–698 (PPED…TKAS), 703–800 (APVN…SGED), 805–901 (APRG…TKKS), and 902–996 (PPSQ…KMSS). N-linked (GlcNAc...) asparagine glycans are attached at residues Asn-659, Asn-765, Asn-860, and Asn-865. Tyr-882 carries the post-translational modification Phosphotyrosine. Residues 887–902 (TGPSSPPVNVTTKKSP) show a composition bias toward polar residues. The interval 887 to 908 (TGPSSPPVNVTTKKSPPSQPPA) is disordered. Residues Asn-895, Asn-931, Asn-956, and Asn-957 are each glycosylated (N-linked (GlcNAc...) asparagine). The GPI-anchor amidated serine moiety is linked to residue Ser-999. The propeptide at 1000 to 1028 (RGIQFLEPSTHFLSIVIVIFHCFAIQPLI) is removed in mature form.

The protein belongs to the immunoglobulin superfamily. Contactin family. Interacts with PTPRG. As to expression, expressed in nervous system. Highly expressed in cerebellum. Expressed at intermediate level in thalamus, subthalamic nucleus. Weakly expressed in corpus callosum, caudate nucleus and spinal cord.

It localises to the cell membrane. Its function is as follows. Contactins mediate cell surface interactions during nervous system development. Participates in oligodendrocytes generation by acting as a ligand of NOTCH1. Its association with NOTCH1 promotes NOTCH1 activation through the released notch intracellular domain (NICD) and subsequent translocation to the nucleus. Involved in motor coordination. In Homo sapiens (Human), this protein is Contactin-6 (CNTN6).